An 87-amino-acid chain; its full sequence is Protein WFDC11 (87 aa).

An N-terminal signal peptide occupies residues 1 to 25; the sequence is MVSLMKLWIPMLMTFFCTVLLSVLG.

It is found in the secreted. This is Protein WFDC11 (WFDC11) from Homo sapiens (Human).